The chain runs to 483 residues: tRNA-2-methylthio-N(6)-dimethylallyladenosine synthase (483 aa).

The MTTase N-terminal domain occupies 31–148 (KKLYIETQGC…LPQMLDQHHA (118 aa)). Cys40, Cys77, Cys111, Cys192, Cys196, and Cys199 together coordinate [4Fe-4S] cluster. Residues 178 to 410 (RVEGFKAFVS…QQVIKQSSIE (233 aa)) form the Radical SAM core domain. The TRAM domain maps to 413 to 477 (DAMLGKIERV…LNLVYGELLN (65 aa)).

Belongs to the methylthiotransferase family. MiaB subfamily. Monomer. Requires [4Fe-4S] cluster as cofactor.

The protein localises to the cytoplasm. It carries out the reaction N(6)-dimethylallyladenosine(37) in tRNA + (sulfur carrier)-SH + AH2 + 2 S-adenosyl-L-methionine = 2-methylsulfanyl-N(6)-dimethylallyladenosine(37) in tRNA + (sulfur carrier)-H + 5'-deoxyadenosine + L-methionine + A + S-adenosyl-L-homocysteine + 2 H(+). Its function is as follows. Catalyzes the methylthiolation of N6-(dimethylallyl)adenosine (i(6)A), leading to the formation of 2-methylthio-N6-(dimethylallyl)adenosine (ms(2)i(6)A) at position 37 in tRNAs that read codons beginning with uridine. The sequence is that of tRNA-2-methylthio-N(6)-dimethylallyladenosine synthase from Acinetobacter baumannii (strain ACICU).